Consider the following 204-residue polypeptide: LexA repressor (204 aa).

A DNA-binding region (H-T-H motif) is located at residues 29–49 (VREIGDAVGLMSSSTVHGHLQ). Residues S127 and K164 each act as for autocatalytic cleavage activity in the active site.

It belongs to the peptidase S24 family. In terms of assembly, homodimer.

The enzyme catalyses Hydrolysis of Ala-|-Gly bond in repressor LexA.. Its function is as follows. Represses a number of genes involved in the response to DNA damage (SOS response), including recA and lexA. In the presence of single-stranded DNA, RecA interacts with LexA causing an autocatalytic cleavage which disrupts the DNA-binding part of LexA, leading to derepression of the SOS regulon and eventually DNA repair. This chain is LexA repressor, found in Desulfitobacterium hafniense (strain DSM 10664 / DCB-2).